Here is a 533-residue protein sequence, read N- to C-terminus: Leucine-rich glioma-inactivated protein 1 (533 aa).

An N-terminal signal peptide occupies residues 1–34 (MESERSQRMGNACIPLKRIAYCLCLLSALLLTEG). The 38-residue stretch at 35–72 (KKPAKPKCPAVCTCTKDNALCENARSIPRTVPPDVISL) folds into the LRRNT domain. LRR repeat units follow at residues 92 to 113 (HLEYLFIENNNIKSISRHTFRG) and 116 to 137 (SLIHLSLANNNLQTLPKDIFKG). Positions 149–199 (NSFNCDCKLKWLVEWLSHTNATVEDIYCEGPPEYKKRKINSLSSKDFDCII) constitute an LRRCT domain. The N-linked (GlcNAc...) asparagine glycan is linked to Asn-168. 7 EAR repeats span residues 201 to 243 (EFAK…EWDH), 247 to 289 (TFRN…KRDS), 293 to 340 (KFIK…KWNG), 342 to 391 (GFYS…QWNK), 395 to 438 (LFTN…KWGG), 440 to 482 (SFQD…NWDA), and 486 to 528 (KFVK…KHVI). Asn-253 is a glycosylation site (N-linked (GlcNAc...) asparagine). Asn-398 carries N-linked (GlcNAc...) asparagine glycosylation.

As to quaternary structure, oligomer. Interacts with KCNA1 within a complex containing KCNA1, KCNA4 and KCNAB1. Part of a complex containing ADAM22, DLG4/PSD95 and CACNG2 (stargazin). Can bind to ADAM11 and ADAM23. Post-translationally, glycosylated.

The protein resides in the secreted. It is found in the synapse. It localises to the cytoplasm. Functionally, regulates voltage-gated potassium channels assembled from KCNA1, KCNA4 and KCNAB1. It slows down channel inactivation by precluding channel closure mediated by the KCNAB1 subunit. Ligand for ADAM22 that positively regulates synaptic transmission mediated by AMPA-type glutamate receptors. Plays a role in suppressing the production of MMP1/3 through the phosphatidylinositol 3-kinase/ERK pathway. The polypeptide is Leucine-rich glioma-inactivated protein 1 (LGI1) (Bos taurus (Bovine)).